The chain runs to 888 residues: Alanine--tRNA ligase (888 aa).

H573, H577, C676, and H680 together coordinate Zn(2+).

It belongs to the class-II aminoacyl-tRNA synthetase family. Zn(2+) serves as cofactor.

The protein resides in the cytoplasm. The catalysed reaction is tRNA(Ala) + L-alanine + ATP = L-alanyl-tRNA(Ala) + AMP + diphosphate. Catalyzes the attachment of alanine to tRNA(Ala) in a two-step reaction: alanine is first activated by ATP to form Ala-AMP and then transferred to the acceptor end of tRNA(Ala). Also edits incorrectly charged Ser-tRNA(Ala) and Gly-tRNA(Ala) via its editing domain. The protein is Alanine--tRNA ligase of Corynebacterium diphtheriae (strain ATCC 700971 / NCTC 13129 / Biotype gravis).